The chain runs to 278 residues: HTH-type transcriptional activator RhaS (278 aa).

An HTH araC/xylS-type domain is found at 174 to 272; that stretch reads NLLLAWLEDH…NWSPRDIRQG (99 aa). 2 DNA-binding regions (H-T-H motif) span residues 191–212 and 239–262; these read DAVADQFSLSLRTLHRQLKQQT and VTDIAYRCGFSDSNHFSTLFRREF.

In terms of assembly, binds DNA as a dimer.

Its subcellular location is the cytoplasm. In terms of biological role, activates expression of the rhaBAD and rhaT operons. In Shigella flexneri serotype 5b (strain 8401), this protein is HTH-type transcriptional activator RhaS.